The sequence spans 244 residues: Pyridoxal phosphate homeostasis protein (244 aa).

Lys-37 is modified (N6-(pyridoxal phosphate)lysine).

This sequence belongs to the pyridoxal phosphate-binding protein YggS/PROSC family.

Its function is as follows. Pyridoxal 5'-phosphate (PLP)-binding protein, which may be involved in intracellular homeostatic regulation of pyridoxal 5'-phosphate (PLP), the active form of vitamin B6. This chain is Pyridoxal phosphate homeostasis protein, found in Caenorhabditis elegans.